Consider the following 390-residue polypeptide: MTKIYFIAGETSGDFIGGRIIQHLKDNIEIKCMGVGGKYMEEAGSFKSLFSITSINLMGFVEILPHIFKLKKLIDKTVEDITNSRADLLITIDSPGFTYRVAKRVRKLLPKLKMIHIVAPSVWAYKEDRAVKYAQIYDCLFALLPFEPPYFTRLGLDCRYIGHPIMEQEFYSDKVALRKEFKIDENERVLCVTLGSRKGEILRHLPVFVSSIEEIFKSCNNLKVIFTLANPAHEAIIKPFLEDVKFNYLFSSERLKTYAVADAALAKSGTNTLEIAASGTPMIVAYKVNLISFFIIRLLIKIKYVTLINIIAGSEIIPEFIQFNCRASLISNKLQELLFNSKKAYEQVIESQKILQKLGFESNRSPSYIAAEIIKQEFLKPKIKLLKEKD.

It belongs to the LpxB family.

It catalyses the reaction a lipid X + a UDP-2-N,3-O-bis[(3R)-3-hydroxyacyl]-alpha-D-glucosamine = a lipid A disaccharide + UDP + H(+). Its pathway is bacterial outer membrane biogenesis; LPS lipid A biosynthesis. Condensation of UDP-2,3-diacylglucosamine and 2,3-diacylglucosamine-1-phosphate to form lipid A disaccharide, a precursor of lipid A, a phosphorylated glycolipid that anchors the lipopolysaccharide to the outer membrane of the cell. In Rickettsia felis (strain ATCC VR-1525 / URRWXCal2) (Rickettsia azadi), this protein is Lipid-A-disaccharide synthase.